The sequence spans 62 residues: MKTLLPNVNTSEGCFEIGVTISNPVFTEDAINKRKQERELLNKICIVSMLARLRLMPKGCAQ.

Involved in cell division inhibition; this function can be repressed by DicA and DicC proteins as well as antitoxin CbeA (yeeU). The chain is Division inhibition protein DicB (dicB) from Escherichia coli (strain K12).